The primary structure comprises 382 residues: Glutamate 5-kinase (382 aa).

An ATP-binding site is contributed by Lys15. Substrate contacts are provided by Ser62, Asp149, and Asn161. An ATP-binding site is contributed by 181–182 (TD). The PUA domain maps to 288-366 (RGSVSVDAGA…VEIERLLGYS (79 aa)).

It belongs to the glutamate 5-kinase family.

The protein resides in the cytoplasm. The catalysed reaction is L-glutamate + ATP = L-glutamyl 5-phosphate + ADP. The protein operates within amino-acid biosynthesis; L-proline biosynthesis; L-glutamate 5-semialdehyde from L-glutamate: step 1/2. Functionally, catalyzes the transfer of a phosphate group to glutamate to form L-glutamate 5-phosphate. This chain is Glutamate 5-kinase, found in Delftia acidovorans (strain DSM 14801 / SPH-1).